The chain runs to 457 residues: Phosphomethylpyrimidine synthase (457 aa).

Substrate contacts are provided by residues asparagine 80, methionine 109, tyrosine 139, histidine 175, 195-197 (SRG), 236-239 (DSLR), and glutamate 275. Histidine 279 lines the Zn(2+) pocket. Tyrosine 302 is a substrate binding site. Histidine 343 serves as a coordination point for Zn(2+). The [4Fe-4S] cluster site is built by cysteine 423, cysteine 426, and cysteine 431.

The protein belongs to the ThiC family. The cofactor is [4Fe-4S] cluster.

It catalyses the reaction 5-amino-1-(5-phospho-beta-D-ribosyl)imidazole + S-adenosyl-L-methionine = 4-amino-2-methyl-5-(phosphooxymethyl)pyrimidine + CO + 5'-deoxyadenosine + formate + L-methionine + 3 H(+). It functions in the pathway cofactor biosynthesis; thiamine diphosphate biosynthesis. In terms of biological role, catalyzes the synthesis of the hydroxymethylpyrimidine phosphate (HMP-P) moiety of thiamine from aminoimidazole ribotide (AIR) in a radical S-adenosyl-L-methionine (SAM)-dependent reaction. This is Phosphomethylpyrimidine synthase from Nostoc sp. (strain PCC 7120 / SAG 25.82 / UTEX 2576).